We begin with the raw amino-acid sequence, 593 residues long: Arginine--tRNA ligase (593 aa).

The 'HIGH' region motif lies at alanine 138–histidine 148.

Belongs to the class-I aminoacyl-tRNA synthetase family. In terms of assembly, monomer.

The protein resides in the cytoplasm. It carries out the reaction tRNA(Arg) + L-arginine + ATP = L-arginyl-tRNA(Arg) + AMP + diphosphate. The sequence is that of Arginine--tRNA ligase from Burkholderia ambifaria (strain ATCC BAA-244 / DSM 16087 / CCUG 44356 / LMG 19182 / AMMD) (Burkholderia cepacia (strain AMMD)).